Reading from the N-terminus, the 273-residue chain is MSQPILVFDSGIGGLSVLAEIRKLLPHHDYCYLFDNARLPYGELEEQELISGCVALIDQVVERTHAAIVVVACNTASTVVLPALRATLSIPVVGVVPAIKPAAQLSKSKRIGLLATPGTVKRHYTYELISQFADDCHVELFGSSELVLMAEQKIATGQLDMVRLTQVLSPIVEADLDVLVLGCTHFPMLRDELQQVLGQGVTLLDSGEAIAKRVKTLLAETKSDEQVQEEDAHSNLLMQAFYTKAEISEGLATTLVDCGFSTLERITTINSNG.

Substrate contacts are provided by residues 9–10 (DS) and 41–42 (YG). Cys73 (proton donor/acceptor) is an active-site residue. A substrate-binding site is contributed by 74–75 (NT). The active-site Proton donor/acceptor is the Cys183. 184–185 (TH) lines the substrate pocket.

This sequence belongs to the aspartate/glutamate racemases family.

It carries out the reaction L-glutamate = D-glutamate. It participates in cell wall biogenesis; peptidoglycan biosynthesis. Provides the (R)-glutamate required for cell wall biosynthesis. This is Glutamate racemase from Shewanella sp. (strain ANA-3).